Reading from the N-terminus, the 372-residue chain is Cell division protein FtsZ 1 (372 aa).

Residues 51-55 (GAGCN), 138-140 (GTG), E169, R173, and D216 each bind GTP. Residues 351 to 372 (QEETPEPSEEEVPPVKIDIPEL) form a disordered region. Over residues 353–362 (ETPEPSEEEV) the composition is skewed to acidic residues.

The protein belongs to the FtsZ family. As to quaternary structure, homodimer. Polymerizes to form a dynamic ring structure in a strictly GTP-dependent manner. Interacts directly with several other division proteins.

It is found in the cytoplasm. In terms of biological role, essential cell division protein that forms a contractile ring structure (Z ring) at the future cell division site. The regulation of the ring assembly controls the timing and the location of cell division. One of the functions of the FtsZ ring is to recruit other cell division proteins to the septum to produce a new cell wall between the dividing cells. Binds GTP and shows GTPase activity. The polypeptide is Cell division protein FtsZ 1 (Pyrococcus abyssi (strain GE5 / Orsay)).